Consider the following 440-residue polypeptide: T-box transcription factor TBX20 (440 aa).

Residues 103–282 (LWDKFHDLGT…SNPFAKGFRD (180 aa)) constitute a DNA-binding region (T-box).

It localises to the nucleus. Its function is as follows. Transcriptional regulator that may be involved in heart developmental processes. This is T-box transcription factor TBX20 (tbx20) from Xenopus tropicalis (Western clawed frog).